The chain runs to 476 residues: Argininosuccinate lyase (476 aa).

This sequence belongs to the lyase 1 family. Argininosuccinate lyase subfamily.

It is found in the cytoplasm. The catalysed reaction is 2-(N(omega)-L-arginino)succinate = fumarate + L-arginine. It functions in the pathway amino-acid biosynthesis; L-arginine biosynthesis; L-arginine from L-ornithine and carbamoyl phosphate: step 3/3. The polypeptide is Argininosuccinate lyase (Leptothrix cholodnii (strain ATCC 51168 / LMG 8142 / SP-6) (Leptothrix discophora (strain SP-6))).